Reading from the N-terminus, the 874-residue chain is MNRWARWPLIILIGILGISAVVILSSLASVDYLINIWWFDSLGYGLYYWLRLLYRYIVFGAVTLLFFLIFFLNFWVASRYVGNVPPAPSKFRIAALDRYLNVVRMFRSGSLWVYTPLSLILAVIIALPIFEKWEAFLLYVAGPKTGVPDPVYGKDISYYLFSYPIYTLVQRRLLIAFVLLLVGLVALYLLERRLLARQEQPIPAGARLHLSILILLIFLIETWDYVLQRYELLYSEAHMPLFYGGGFVEMYVIWALIWLTLFFLMGTAFSMIAFIQTRKGLKPLVVFAVGFVLVLGLRYSAFLPATVEKLVVKPNEVSRERDFIVNNIKATLSAYNLNTVQTRDFTPARTAADVASPKVKAQLRNIPVWDGELLDDVYKQLQQLRTYYTFPSVDVARYTVNGMPQQVFLSVRELDYTLIPEAARNWVNEHLSYTHGYGAVMTPASQGGDEPMTWFIKGIPPESEYGFRIEQPGVYIGLGSYTYVIAPNDAGEIDYPKGNSNTMVSYKAEDGVPLSSFLRRILFAYHFGDRNLLFTTKTTPDSKILFRRNLLERIRVLTPFLLLDGDPYAVVTPGKLYWIQDAYTTSEFYPGATPTLWGRDRFNYIRNSVKIVVDAFSGKVEYYVFEPGDPIVRAYSRIYPGVFRNADQMPPELKAQVRYPQDIFEIQMNIYAKYQQTDPEVYYQQEDMWEPAKTFQDRTPVTIKPYYVTLDLIDPSRFDFLLLAPMSPKGRDNLRALALAGSDPPHYGKIIVYNFPKGELIYGPSQIYALINQDTRISEQFTLWDQVGSQVARGKMIILPISNMILYIQPVYLKSATKLKIPELKRIIMSQGQIVVMEPSLEEAYAKLQERIKLEIDRVDKRFAPLLPGSPAGR.

The next 7 helical transmembrane spans lie at 7-27 (WPLI…LSSL), 57-77 (IVFG…FWVA), 110-130 (SLWV…LPIF), 171-191 (RRLL…YLLE), 208-228 (LHLS…YVLQ), 252-272 (VIWA…FSMI), and 283-303 (PLVV…SAFL).

This sequence belongs to the UPF0182 family.

It localises to the cell membrane. The polypeptide is UPF0182 protein Sfum_2137 (Syntrophobacter fumaroxidans (strain DSM 10017 / MPOB)).